The chain runs to 586 residues: Kelch-like protein 7 (586 aa).

A BTB domain is found at 44 to 111 (CDVILTVQER…AYTARISVNS (68 aa)). Positions 146–248 (CLGISVLAEC…SKNFLSKTVQ (103 aa)) constitute a BACK domain. Kelch repeat units follow at residues 294–336 (RIAL…FWDN), 337–382 (VVYI…AAEG), 383–430 (KIYT…EANG), 431–481 (LIYV…FVKD), 483–528 (IFAV…AVGS), and 530–575 (IYVL…CVVD).

Homodimer. Component of the BCR(KLHL7) E3 ubiquitin ligase complex, at least composed of CUL3 and KLHL7 and RBX1.

It is found in the nucleus. The protein resides in the cytoplasm. The protein operates within protein modification; protein ubiquitination. Functionally, substrate-specific adapter of a BCR (BTB-CUL3-RBX1) E3 ubiquitin ligase complex. The BCR(KLHL7) complex acts by mediating ubiquitination and subsequent degradation of substrate proteins. Probably mediates 'Lys-48'-linked ubiquitination. The sequence is that of Kelch-like protein 7 (Klhl7) from Mus musculus (Mouse).